The following is a 108-amino-acid chain: Protein translation factor SUI1 (108 aa).

A disordered region spans residues Met1 to Ala20.

Belongs to the SUI1 family.

Functionally, additional factor that functions in concert with eIF-2 and the initiator tRNA in directing the ribosome to the proper start site of translation. This chain is Protein translation factor SUI1 (SUI1A), found in Eremothecium gossypii (strain ATCC 10895 / CBS 109.51 / FGSC 9923 / NRRL Y-1056) (Yeast).